The primary structure comprises 285 residues: Iodotyrosine deiodinase 1 (285 aa).

Residues 1-21 (MFLLTPVLVAVVCILVIWVFK) form a helical membrane-spanning segment. FMN is bound by residues 96-100 (RRSIR) and 124-125 (SG). Positions 126, 153, 157, and 178 each coordinate 3,5-diiodo-L-tyrosine. 3-iodo-L-tyrosine is bound by residues A126, E153, Y157, and K178. FMN-binding positions include 233–235 (TTT) and R275.

It belongs to the nitroreductase family. In terms of assembly, homodimer. It depends on FMN as a cofactor.

The protein localises to the cell membrane. It localises to the cytoplasmic vesicle membrane. The catalysed reaction is 2 iodide + L-tyrosine + 2 NADP(+) = 3,5-diiodo-L-tyrosine + 2 NADPH + H(+). It catalyses the reaction iodide + L-tyrosine + NADP(+) = 3-iodo-L-tyrosine + NADPH. The enzyme catalyses 3-iodo-L-tyrosine + iodide + NADP(+) = 3,5-diiodo-L-tyrosine + NADPH + H(+). It carries out the reaction L-tyrosine + chloride + NADP(+) = 3-chloro-L-tyrosine + NADPH. The catalysed reaction is bromide + L-tyrosine + NADP(+) = 3-bromo-L-tyrosine + NADPH. Catalyzes the dehalogenation of halotyrosines such as 3-bromo-L-tyrosine, 3-chloro-L-tyrosine, 3-iodo-L-tyrosine and 3,5-diiodo-L-tyrosine. During thyroid hormone biosynthesis, facilitates iodide salvage by catalysing the oxidative NADPH-dependent deiodination of the halogenated by-products of thyroid hormone production, monoiodotyrosine (L-MIT) and diiodotyrosine (L-DIT). The scavanged iodide can then reenter the hormone-producing pathways. Acts more efficiently on 3-iodo-L-tyrosine than 3,5-diiodo-L-tyrosine. In Rattus norvegicus (Rat), this protein is Iodotyrosine deiodinase 1 (Iyd).